The sequence spans 90 residues: MIQRQFTVYGCVQGVGFRFFTAREANKLGIQGYVKNQADGSVRVVAAGSDRQVAAFRDWLEQGPPTAEVTNLLEQEYTGGRVFSDFTIER.

Residues 3-90 (QRQFTVYGCV…RVFSDFTIER (88 aa)) enclose the Acylphosphatase-like domain. Residues R18 and N36 contribute to the active site.

This sequence belongs to the acylphosphatase family.

It carries out the reaction an acyl phosphate + H2O = a carboxylate + phosphate + H(+). This chain is Acylphosphatase (acyP), found in Actinobacillus succinogenes (strain ATCC 55618 / DSM 22257 / CCUG 43843 / 130Z).